A 385-amino-acid polypeptide reads, in one-letter code: Polyketide synthase 1 (385 aa).

Cys-157 is a catalytic residue.

The protein belongs to the thiolase-like superfamily. Chalcone/stilbene synthases family. In terms of tissue distribution, expressed in glandular trichomes.

It is found in the cytoplasm. In terms of biological role, polyketide synthase responsible for the biosynthesis of secondary metabolites. This chain is Polyketide synthase 1 (PKSG1), found in Cannabis sativa (Hemp).